The chain runs to 88 residues: Large ribosomal subunit protein eL34 (88 aa).

The disordered stretch occupies residues 41–72 (RPLNGIPRGRPNELRKLPKTKKRPERPMPNLC).

The protein belongs to the eukaryotic ribosomal protein eL34 family.

In Thermococcus sibiricus (strain DSM 12597 / MM 739), this protein is Large ribosomal subunit protein eL34.